Reading from the N-terminus, the 371-residue chain is tRNA-specific 2-thiouridylase MnmA (371 aa).

ATP-binding positions include 11–18 (GMSGGVDS) and Met37. The interaction with target base in tRNA stretch occupies residues 97–99 (NPD). Cys102 functions as the Nucleophile in the catalytic mechanism. A disulfide bond links Cys102 and Cys199. Residue Gly127 coordinates ATP. The interval 149–151 (KDQ) is interaction with tRNA. Cys199 acts as the Cysteine persulfide intermediate in catalysis. The segment at 311–312 (RY) is interaction with tRNA.

The protein belongs to the MnmA/TRMU family.

The protein resides in the cytoplasm. The enzyme catalyses S-sulfanyl-L-cysteinyl-[protein] + uridine(34) in tRNA + AH2 + ATP = 2-thiouridine(34) in tRNA + L-cysteinyl-[protein] + A + AMP + diphosphate + H(+). In terms of biological role, catalyzes the 2-thiolation of uridine at the wobble position (U34) of tRNA, leading to the formation of s(2)U34. In Idiomarina loihiensis (strain ATCC BAA-735 / DSM 15497 / L2-TR), this protein is tRNA-specific 2-thiouridylase MnmA.